The following is a 206-amino-acid chain: uncharacterized protein (206 aa).

The protein resides in the plastid. Its subcellular location is the cyanelle. This is an uncharacterized protein from Cyanophora paradoxa.